The primary structure comprises 374 residues: Proteinase-activated receptor 3 (374 aa).

An N-terminal signal peptide occupies residues 1 to 21 (MKALIFAAAGLLLLLPTFCQS). Positions 22-38 (GMENDTNNLAKPTLPIK) are cleaved as a propeptide — removed for receptor activation. N-linked (GlcNAc...) asparagine glycosylation is found at N25 and N82. Residues 39–94 (TFRGAPPNSFEEFPFSALEGWTGATITVKIKCPEESASHLHVKNATMGYLTSSLST) lie on the Extracellular side of the membrane. The chain crosses the membrane as a helical span at residues 95-120 (KLIPAIYLLVFVVGVPANAVTLWMLF). Residues 121–128 (FRTRSICT) are Cytoplasmic-facing. The helical transmembrane segment at 129–148 (TVFYTNLAIADFLFCVTLPF) threads the bilayer. The Extracellular segment spans residues 149–167 (KIAYHLNGNNWVFGEVLCR). A disulfide bridge connects residues C166 and C245. Residues 168–189 (ATTVIFYGNMYCSILLLACISI) traverse the membrane as a helical segment. The Cytoplasmic portion of the chain corresponds to 190 to 206 (NRYLAIVHPFTYRGLPK). Residues 207-230 (HTYALVTCGLVWATVFLYMLPFFI) traverse the membrane as a helical segment. Residues 231–260 (LKQEYYLVQPDITTCHDVHNTCESSSPFQL) are Extracellular-facing. Residues 261–280 (YYFISLAFFGFLIPFVLIIY) traverse the membrane as a helical segment. Topologically, residues 281–297 (CYAAIIRTLNAYDHRWL) are cytoplasmic. A helical transmembrane segment spans residues 298–322 (WYVKASLLILVIFTICFAPSNIILI). Residues 323–336 (IHHANYYYNNTDGL) are Extracellular-facing. N331 is a glycosylation site (N-linked (GlcNAc...) asparagine). A helical membrane pass occupies residues 337–361 (YFIYLIALCLGSLNSCLDPFLYFLM). At 362–374 (SKTRNHSTAYLTK) the chain is on the cytoplasmic side.

Belongs to the G-protein coupled receptor 1 family. In terms of assembly, interacts with INSC/inscuteable and probably GPSM2. A proteolytic cleavage generates a new N-terminus that functions as a tethered ligand. In terms of tissue distribution, highest expression in the megakaryocytes of the bone marrow, lower in mature megakaryocytes, in platelets and in a variety of other tissues such as heart and gut.

Its subcellular location is the cell membrane. In terms of biological role, receptor for activated thrombin coupled to G proteins that stimulate phosphoinositide hydrolysis. In Homo sapiens (Human), this protein is Proteinase-activated receptor 3 (F2RL2).